Here is a 336-residue protein sequence, read N- to C-terminus: Dihydroorotate dehydrogenase (quinone) (336 aa).

Residues 62-66 (AGLDK) and Thr-86 each bind FMN. Substrate is bound at residue Lys-66. Substrate is bound at residue 111 to 115 (NRMGF). Residues Asn-139 and Asn-172 each coordinate FMN. Asn-172 contributes to the substrate binding site. Residue Ser-175 is the Nucleophile of the active site. Residue Asn-177 participates in substrate binding. FMN is bound by residues Lys-217 and Thr-245. Residue 246 to 247 (NT) participates in substrate binding. FMN is bound by residues Gly-268, Gly-297, and 318–319 (YS).

Belongs to the dihydroorotate dehydrogenase family. Type 2 subfamily. Monomer. FMN serves as cofactor.

The protein resides in the cell membrane. It catalyses the reaction (S)-dihydroorotate + a quinone = orotate + a quinol. Its pathway is pyrimidine metabolism; UMP biosynthesis via de novo pathway; orotate from (S)-dihydroorotate (quinone route): step 1/1. Catalyzes the conversion of dihydroorotate to orotate with quinone as electron acceptor. This chain is Dihydroorotate dehydrogenase (quinone), found in Serratia proteamaculans (strain 568).